A 544-amino-acid polypeptide reads, in one-letter code: MTKFIFVTGGVVSSLGKGIAAASIAAILESRGLNVTMLKLDPYINVDPGTMSPFQHGEVFVTDDGAETDLDLGHYERFIDSTMTRRNSFSTGQVYENVIAKERRGDYLGGTVQVIPHITDEIKRRIHEGAAGYDVAIVEIGGTVGDIESLPFLEAIRQMRSQLGRNNTLFAHLSYVPYIAAAGEIKTKPTQHTVKEMLSIGLQPDILICRMDRKMPADERRKIALFCNVEERAIVGSYDVDSIYECPEMLHDQGIDNIITEQLQLNVQQADLTAWKKIVHAVKNPKHTVKIAMVGKYVDLTESYKSLIEALKHAGIHTETDVQITFVDSESIEKNKGDVSVLKDMDAILVPGGFGSRGVEGKIAAVRYARENNVPYLGICLGMQIALIEYARDVAGLKGANSTEFDLKCAAPVVALIDEWQTADGSVETRDESADLGGTMRLGAQEVELKAGSLAVKIYGSGHIRERHRHRYEVNNNYVSALEQAGLVIGGVSAGRERLVETIELPNHPWFFACQFHPEFTSNPRKGHPLFTAFVKAALNNKKA.

The segment at methionine 1–leucine 265 is amidoligase domain. Serine 13 contacts CTP. Residue serine 13 participates in UTP binding. ATP is bound by residues serine 14 to isoleucine 19 and aspartate 71. Positions 71 and 139 each coordinate Mg(2+). CTP-binding positions include aspartate 146–glutamate 148, lysine 186–glutamine 191, and lysine 222. UTP contacts are provided by residues lysine 186–glutamine 191 and lysine 222. Residues lysine 290–alanine 544 form the Glutamine amidotransferase type-1 domain. L-glutamine is bound at residue glycine 353. The active-site Nucleophile; for glutamine hydrolysis is cysteine 380. Residues leucine 381 to glutamine 384, glutamate 404, and arginine 471 contribute to the L-glutamine site. Catalysis depends on residues histidine 517 and glutamate 519.

The protein belongs to the CTP synthase family. Homotetramer.

The catalysed reaction is UTP + L-glutamine + ATP + H2O = CTP + L-glutamate + ADP + phosphate + 2 H(+). The enzyme catalyses L-glutamine + H2O = L-glutamate + NH4(+). It catalyses the reaction UTP + NH4(+) + ATP = CTP + ADP + phosphate + 2 H(+). The protein operates within pyrimidine metabolism; CTP biosynthesis via de novo pathway; CTP from UDP: step 2/2. Its activity is regulated as follows. Allosterically activated by GTP, when glutamine is the substrate; GTP has no effect on the reaction when ammonia is the substrate. The allosteric effector GTP functions by stabilizing the protein conformation that binds the tetrahedral intermediate(s) formed during glutamine hydrolysis. Inhibited by the product CTP, via allosteric rather than competitive inhibition. In terms of biological role, catalyzes the ATP-dependent amination of UTP to CTP with either L-glutamine or ammonia as the source of nitrogen. Regulates intracellular CTP levels through interactions with the four ribonucleotide triphosphates. This Neisseria gonorrhoeae (strain ATCC 700825 / FA 1090) protein is CTP synthase.